The following is a 195-amino-acid chain: Elongation factor P (195 aa).

This sequence belongs to the elongation factor P family.

The protein resides in the cytoplasm. It functions in the pathway protein biosynthesis; polypeptide chain elongation. Functionally, involved in peptide bond synthesis. Stimulates efficient translation and peptide-bond synthesis on native or reconstituted 70S ribosomes in vitro. Probably functions indirectly by altering the affinity of the ribosome for aminoacyl-tRNA, thus increasing their reactivity as acceptors for peptidyl transferase. In Rhodopirellula baltica (strain DSM 10527 / NCIMB 13988 / SH1), this protein is Elongation factor P.